The sequence spans 39 residues: Protein disulfide-isomerase A3 (39 aa).

Belongs to the protein disulfide isomerase family. As to quaternary structure, part of the major histocompatibility complex class I (MHC I) peptide loading complex composed of TAP1, TAP2, B2M, MHC heavy chain, TAPBP, PDIA3, and CALR. Interacts with ERP27 and CANX. Interacts with SERPINA2 and with SERPINA1. Interacts with ATP2A2. Post-translationally, within the major histocompatibility complex class I (MHC I) peptide loading complex forms reversible disulfide-linked heterodimers with TAPBP as part of its protein folding chaperone activity. This is essential to assist the dynamic assembly of the MHC I complex with high affinity antigens in the endoplasmic reticulum. In terms of processing, phosphorylated. In terms of tissue distribution, predominantly expressed in liver. Low in brain, testis and colon. Not detectable in pancreas and skeletal muscle.

It is found in the endoplasmic reticulum. The protein resides in the endoplasmic reticulum lumen. Its subcellular location is the melanosome. It catalyses the reaction Catalyzes the rearrangement of -S-S- bonds in proteins.. Its function is as follows. Protein disulfide isomerase that catalyzes the formation, isomerization, and reduction or oxidation of disulfide bonds in client proteins and functions as a protein folding chaperone. Core component of the major histocompatibility complex class I (MHC I) peptide loading complex where it functions as an essential folding chaperone for TAPBP. Through TAPBP, assists the dynamic assembly of the MHC I complex with high affinity antigens in the endoplasmic reticulum. Therefore, plays a crucial role in the presentation of antigens to cytotoxic T cells in adaptive immunity. The chain is Protein disulfide-isomerase A3 (PDIA3) from Papio hamadryas (Hamadryas baboon).